We begin with the raw amino-acid sequence, 289 residues long: Diaminopimelate epimerase (289 aa).

Residues N13, Q52, and N72 each coordinate substrate. Residue C81 is the Proton donor of the active site. Residues 82–83 (GN), N167, N201, and 219–220 (ER) each bind substrate. C228 serves as the catalytic Proton acceptor. 229 to 230 (GT) contributes to the substrate binding site.

The protein belongs to the diaminopimelate epimerase family. In terms of assembly, homodimer.

The protein localises to the cytoplasm. It catalyses the reaction (2S,6S)-2,6-diaminopimelate = meso-2,6-diaminopimelate. It functions in the pathway amino-acid biosynthesis; L-lysine biosynthesis via DAP pathway; DL-2,6-diaminopimelate from LL-2,6-diaminopimelate: step 1/1. In terms of biological role, catalyzes the stereoinversion of LL-2,6-diaminopimelate (L,L-DAP) to meso-diaminopimelate (meso-DAP), a precursor of L-lysine and an essential component of the bacterial peptidoglycan. This chain is Diaminopimelate epimerase, found in Caulobacter sp. (strain K31).